The chain runs to 533 residues: MPNLDLSRYGITDVEEIVHNPSYDLLFEEETRDDLQGYEKGTVTDLGAVAVDTGIFTGRSPKDKYIVRDDTTRDTVWWADQGKNDNKPLSTETWNELKGLVTEQLSHKRLFVVDTYCGANEDTRLAVRFITEVAWQAHFVKNMFIRPSEEELENFEPDFVVMNGAKCINPKWQEQELNSENFVAFNLTEKIQLIGGTWYGGEMKKGMFSMMNYFLPLKGIASMHCSANVGQEGDVAVFFGLSGTGKTTLSTDPKRALIGDDEHGWDDDGVFNFEGGCYAKTINLSKEAEPDIYNAIRRDALLENVAVDDNGVVDFDDNSKTENTRVSYPIYHIDNIVKPVSKAGHAKKVIFLTADAFGVLPPVSKLTKEQAQYHFLSGFTAKLAGTERGVTEPTPTFSSCFGAAFLSLHPTQYAEVLVKRMEAAGAEAYLVNTGWNGTGKRISIKATRAIIDAILDGSIEDAEFVQLPHFNLAMPTELAGVEDSSILDPRKTYEDDGEWDVRAKDLAERFVANFEKFTDTDNGKALVAAGPQL.

The substrate site is built by Arg59, Tyr199, and Lys205. Residues Lys205, His224, and 240–248 (GLSGTGKTT) contribute to the ATP site. Positions 205 and 224 each coordinate Mn(2+). Residue Asp261 participates in Mn(2+) binding. Residues Glu289, Arg325, 441–442 (RI), and Thr447 each bind ATP. Arg325 serves as a coordination point for substrate.

This sequence belongs to the phosphoenolpyruvate carboxykinase (ATP) family. In terms of assembly, monomer. It depends on Mn(2+) as a cofactor.

The protein resides in the cytoplasm. The enzyme catalyses oxaloacetate + ATP = phosphoenolpyruvate + ADP + CO2. It functions in the pathway carbohydrate biosynthesis; gluconeogenesis. Involved in the gluconeogenesis. Catalyzes the conversion of oxaloacetate (OAA) to phosphoenolpyruvate (PEP) through direct phosphoryl transfer between the nucleoside triphosphate and OAA. The sequence is that of Phosphoenolpyruvate carboxykinase (ATP) from Idiomarina loihiensis (strain ATCC BAA-735 / DSM 15497 / L2-TR).